The chain runs to 202 residues: ATP-dependent Clp protease proteolytic subunit 3 (202 aa).

Catalysis depends on S93, which acts as the Nucleophile. H118 is an active-site residue.

This sequence belongs to the peptidase S14 family. In terms of assembly, fourteen ClpP subunits assemble into 2 heptameric rings which stack back to back to give a disk-like structure with a central cavity, resembling the structure of eukaryotic proteasomes.

It is found in the cytoplasm. It catalyses the reaction Hydrolysis of proteins to small peptides in the presence of ATP and magnesium. alpha-casein is the usual test substrate. In the absence of ATP, only oligopeptides shorter than five residues are hydrolyzed (such as succinyl-Leu-Tyr-|-NHMec, and Leu-Tyr-Leu-|-Tyr-Trp, in which cleavage of the -Tyr-|-Leu- and -Tyr-|-Trp bonds also occurs).. Functionally, cleaves peptides in various proteins in a process that requires ATP hydrolysis. Has a chymotrypsin-like activity. Plays a major role in the degradation of misfolded proteins. The sequence is that of ATP-dependent Clp protease proteolytic subunit 3 from Rhodococcus jostii (strain RHA1).